The chain runs to 432 residues: Adenylosuccinate synthetase (432 aa).

GTP is bound by residues 13-19 (GDEGKGK) and 41-43 (GHT). D14 functions as the Proton acceptor in the catalytic mechanism. Residues D14 and G41 each contribute to the Mg(2+) site. Residues 14–17 (DEGK), 39–42 (NAGH), T130, R144, Q225, T240, and R304 each bind IMP. The active-site Proton donor is H42. 300-306 (AVTGRPR) lines the substrate pocket. Residues R306, 332 to 334 (KLD), and 415 to 417 (STG) each bind GTP.

The protein belongs to the adenylosuccinate synthetase family. In terms of assembly, homodimer. Mg(2+) is required as a cofactor.

The protein resides in the cytoplasm. It catalyses the reaction IMP + L-aspartate + GTP = N(6)-(1,2-dicarboxyethyl)-AMP + GDP + phosphate + 2 H(+). It participates in purine metabolism; AMP biosynthesis via de novo pathway; AMP from IMP: step 1/2. In terms of biological role, plays an important role in the de novo pathway of purine nucleotide biosynthesis. Catalyzes the first committed step in the biosynthesis of AMP from IMP. The protein is Adenylosuccinate synthetase of Haemophilus influenzae (strain PittGG).